Consider the following 208-residue polypeptide: Thymidylate kinase (208 aa).

ATP is bound at residue Gly-10–Ser-17.

It belongs to the thymidylate kinase family.

The catalysed reaction is dTMP + ATP = dTDP + ADP. Phosphorylation of dTMP to form dTDP in both de novo and salvage pathways of dTTP synthesis. The chain is Thymidylate kinase from Bacillus cytotoxicus (strain DSM 22905 / CIP 110041 / 391-98 / NVH 391-98).